The sequence spans 612 residues: uncharacterized protein (612 aa).

6 helical membrane-spanning segments follow: residues 13–33, 38–58, 67–87, 107–127, 144–164, and 189–209; these read IPLT…EWLP, AILV…EGIA, TIMA…IQII, GFIV…AIFL, LLIP…LGTS, and LGLL…PILL. 2 consecutive RCK C-terminal domains span residues 218-302 and 316-403; these read GNVA…ERGI and NNAG…LLVL. The next 6 membrane-spanning stretches (helical) occupy residues 419 to 439, 459 to 479, 501 to 521, 525 to 545, 546 to 566, and 586 to 606; these read AIAI…PISV, IYGA…PLGT, LSGY…TEIL, ATVV…GLNP, LAFM…PIGY, and IGAP…MLIY.

This sequence belongs to the SLC13A/DASS transporter (TC 2.A.47) family. NADC subfamily.

The protein resides in the cell membrane. This is an uncharacterized protein from Synechocystis sp. (strain ATCC 27184 / PCC 6803 / Kazusa).